We begin with the raw amino-acid sequence, 291 residues long: Pantothenate synthetase (291 aa).

30–37 (MGALHAGH) is a binding site for ATP. His37 (proton donor) is an active-site residue. Gln61 serves as a coordination point for (R)-pantoate. Gln61 is a binding site for beta-alanine. 147–150 (GQKD) contacts ATP. Gln153 is a (R)-pantoate binding site. ATP-binding positions include Val176 and 184–187 (LSSR).

Belongs to the pantothenate synthetase family. Homodimer.

Its subcellular location is the cytoplasm. It catalyses the reaction (R)-pantoate + beta-alanine + ATP = (R)-pantothenate + AMP + diphosphate + H(+). Its pathway is cofactor biosynthesis; (R)-pantothenate biosynthesis; (R)-pantothenate from (R)-pantoate and beta-alanine: step 1/1. Functionally, catalyzes the condensation of pantoate with beta-alanine in an ATP-dependent reaction via a pantoyl-adenylate intermediate. This chain is Pantothenate synthetase, found in Koribacter versatilis (strain Ellin345).